Consider the following 193-residue polypeptide: Sarcoplasmic calcium-binding protein (193 aa).

3 consecutive EF-hand domains span residues 16–40 (MYDI…NTLI), 57–92 (IMSN…LCCG), and 101–136 (CFKT…RSAF). The Ca(2+) site is built by D18, D20, N22, Y24, D29, D70, N72, D74, Q76, E81, D114, N116, D118, and E125.

As to quaternary structure, monomer and dimer. As to expression, skeletal muscle (at protein level).

Its function is as follows. Like parvalbumins, SCPs seem to be more abundant in fast contracting muscles, but no functional relationship can be established from this distribution. The polypeptide is Sarcoplasmic calcium-binding protein (Scylla paramamosain (Mud crab)).